A 422-amino-acid polypeptide reads, in one-letter code: FAD-dependent monooxygenase ptmM (422 aa).

Residues 8–24 (VIIVGGSIAGLTLAHCL) traverse the membrane as a helical segment. Positions 35, 49, 108, 308, and 321 each coordinate FAD.

Belongs to the paxM FAD-dependent monooxygenase family. The cofactor is FAD.

Its subcellular location is the membrane. The protein operates within secondary metabolite biosynthesis. In terms of biological role, FAD-dependent monooxygenase; part of the gene cluster that mediates the biosynthesis of the indole diterpenes penitrems. The geranylgeranyl diphosphate (GGPP) synthase ptmG catalyzes the first step in penitrem biosynthesis via conversion of farnesyl pyrophosphate and isopentyl pyrophosphate into geranylgeranyl pyrophosphate (GGPP). Condensation of indole-3-glycerol phosphate with GGPP by the prenyl transferase ptmC then forms 3-geranylgeranylindole (3-GGI). Epoxidation by the FAD-dependent monooxygenase ptmM leads to a epoxidized-GGI that is substrate of the terpene cyclase ptmB for cyclization to yield paspaline. Paspaline is subsequently converted to 13-desoxypaxilline by the cytochrome P450 monooxygenase ptmP, the latter being then converted to paxilline by the cytochrome P450 monooxygenase ptmQ. Paxilline is converted to beta-paxitriol via C-10 ketoreduction by the short-chain dehydrogenase ptmH which can be monoprenylated at the C-20 by the indole diterpene prenyltransferase ptmD. A two-step elimination (acetylation and elimination) process performed by the O-acetyltransferase ptmV and ptmI leads to the production of the prenylated form of penijanthine. The FAD-linked oxidoreductase ptmO then converts the prenylated form of penijanthine into PC-M5 which is in turn transformed into PC-M4 by the aromatic dimethylallyltransferase ptmE. Five sequential oxidative transformations performed by the cytochrome P450 monooxygenases ptmK, ptmU, ptmL, ptmN and ptmJ yield the various penitrem compounds. PtmK, ptmU and ptmM are involved in the formation of the key bicyclic ring of penitrem C via the formation of the intermediates secopenitrem D and penitrem D. PtmL catalyzes the epoxidation of penitrem D and C to yield penitrem B and F, respectively. PtmJ catalyzes the last benzylic hydroxylation to convert penitrem B to prenitrem E and penitrem F to penitrem A. The sequence is that of FAD-dependent monooxygenase ptmM from Penicillium ochrochloron.